An 84-amino-acid chain; its full sequence is ATP synthase subunit c (84 aa).

The next 2 membrane-spanning stretches (helical) occupy residues 9 to 29 (IIGA…GFAI) and 54 to 74 (IVAG…LLFI).

It belongs to the ATPase C chain family. F-type ATPases have 2 components, F(1) - the catalytic core - and F(0) - the membrane proton channel. F(1) has five subunits: alpha(3), beta(3), gamma(1), delta(1), epsilon(1). F(0) has three main subunits: a(1), b(2) and c(10-14). The alpha and beta chains form an alternating ring which encloses part of the gamma chain. F(1) is attached to F(0) by a central stalk formed by the gamma and epsilon chains, while a peripheral stalk is formed by the delta and b chains.

It is found in the cell inner membrane. Functionally, f(1)F(0) ATP synthase produces ATP from ADP in the presence of a proton or sodium gradient. F-type ATPases consist of two structural domains, F(1) containing the extramembraneous catalytic core and F(0) containing the membrane proton channel, linked together by a central stalk and a peripheral stalk. During catalysis, ATP synthesis in the catalytic domain of F(1) is coupled via a rotary mechanism of the central stalk subunits to proton translocation. In terms of biological role, key component of the F(0) channel; it plays a direct role in translocation across the membrane. A homomeric c-ring of between 10-14 subunits forms the central stalk rotor element with the F(1) delta and epsilon subunits. This Actinobacillus pleuropneumoniae serotype 7 (strain AP76) protein is ATP synthase subunit c.